Consider the following 64-residue polypeptide: Metallothionein-A (64 aa).

This sequence belongs to the metallothionein superfamily. Type 4 family.

Its function is as follows. Metallothioneins have a high content of cysteine residues that bind various heavy metals. The chain is Metallothionein-A (MTA) from Strongylocentrotus purpuratus (Purple sea urchin).